We begin with the raw amino-acid sequence, 324 residues long: tRNA pseudouridine synthase B (324 aa).

Catalysis depends on Asp-49, which acts as the Nucleophile.

This sequence belongs to the pseudouridine synthase TruB family. Type 1 subfamily.

It catalyses the reaction uridine(55) in tRNA = pseudouridine(55) in tRNA. In terms of biological role, responsible for synthesis of pseudouridine from uracil-55 in the psi GC loop of transfer RNAs. In Brucella anthropi (strain ATCC 49188 / DSM 6882 / CCUG 24695 / JCM 21032 / LMG 3331 / NBRC 15819 / NCTC 12168 / Alc 37) (Ochrobactrum anthropi), this protein is tRNA pseudouridine synthase B.